The primary structure comprises 101 residues: ATP-dependent Clp protease adapter protein ClpS (101 aa).

It belongs to the ClpS family. Binds to the N-terminal domain of the chaperone ClpA.

In terms of biological role, involved in the modulation of the specificity of the ClpAP-mediated ATP-dependent protein degradation. The sequence is that of ATP-dependent Clp protease adapter protein ClpS from Mycobacterium bovis (strain ATCC BAA-935 / AF2122/97).